A 406-amino-acid chain; its full sequence is Large ribosomal subunit protein uL4z (406 aa).

Positions 56-95 (PYAVSKKAGHQTSAESWGTGRAVSRIPRVPGGGTHRAGQA) are disordered.

This sequence belongs to the universal ribosomal protein uL4 family.

The sequence is that of Large ribosomal subunit protein uL4z (RPL4A) from Arabidopsis thaliana (Mouse-ear cress).